Here is a 1614-residue protein sequence, read N- to C-terminus: Chitin synthase csmA (1614 aa).

The interval 1–22 (MAGPAPSGRTPSHAQSSLPSLP) is disordered. The region spanning 1 to 788 (MAGPAPSGRT…CWADLAKLGE (788 aa)) is the Myosin motor domain. Residues 9–19 (RTPSHAQSSLP) show a composition bias toward polar residues. 105–112 (GESGSGKT) lines the ATP pocket. The tract at residues 600–650 (QVSSKPMRMPSMARRKAGPSRLAFDAPEGDDQDEYDSQAGSMSKSSARRKS) is disordered. Over residues 626–635 (PEGDDQDEYD) the composition is skewed to acidic residues. Positions 668–692 (LDIVSKCLNSANLNPYFVFCLKPND) are actin-binding. The next 2 membrane-spanning stretches (helical) occupy residues 898–918 (WMAI…KTFG) and 937–957 (LIIW…PGLI). The Cytochrome b5 heme-binding domain maps to 961–1020 (QHVYSTAELSSHNGKDGHNSFVAIRGIVFNLDKFMPSHYPDIVPEKSLKKYAGTDATGLF). N-linked (GlcNAc...) asparagine glycans are attached at residues Asn1047 and Asn1072. A helical transmembrane segment spans residues 1209-1229 (FILAISIFICLIVVFKFLAAL). Asn1572 is a glycosylation site (N-linked (GlcNAc...) asparagine).

In the N-terminal section; belongs to the TRAFAC class myosin-kinesin ATPase superfamily. Myosin family. It in the C-terminal section; belongs to the chitin synthase family. Class V subfamily.

It is found in the cell membrane. The protein localises to the cell septum. Its subcellular location is the cell tip. The enzyme catalyses [(1-&gt;4)-N-acetyl-beta-D-glucosaminyl](n) + UDP-N-acetyl-alpha-D-glucosamine = [(1-&gt;4)-N-acetyl-beta-D-glucosaminyl](n+1) + UDP + H(+). Functionally, polymerizes chitin, a structural polymer of the cell wall and septum, by transferring the sugar moiety of UDP-GlcNAc to the non-reducing end of the growing chitin polymer. Acts as the major chitin synthase in Aspergillus niger involved in cell wall integrity which is principally responsible for chitin synthesis at the lateral cell wall. Plays an important role in septal growth or maintenance. Mediates colony spore formation. This is Chitin synthase csmA from Aspergillus niger (strain ATCC MYA-4892 / CBS 513.88 / FGSC A1513).